A 118-amino-acid chain; its full sequence is NADH-ubiquinone oxidoreductase chain 3 (118 aa).

3 consecutive transmembrane segments (helical) span residues 5–25, 62–82, and 87–107; these read YIYI…LIFL, LIAI…PWSI, and GSFF…VGFI.

This sequence belongs to the complex I subunit 3 family.

It localises to the mitochondrion membrane. It carries out the reaction a ubiquinone + NADH + 5 H(+)(in) = a ubiquinol + NAD(+) + 4 H(+)(out). In terms of biological role, core subunit of the mitochondrial membrane respiratory chain NADH dehydrogenase (Complex I) that is believed to belong to the minimal assembly required for catalysis. Complex I functions in the transfer of electrons from NADH to the respiratory chain. The immediate electron acceptor for the enzyme is believed to be ubiquinone. In Acanthamoeba castellanii (Amoeba), this protein is NADH-ubiquinone oxidoreductase chain 3 (ND3).